The sequence spans 428 residues: Serine hydroxymethyltransferase (428 aa).

Residues L127 and 131–133 (GHL) each bind (6S)-5,6,7,8-tetrahydrofolate. K236 bears the N6-(pyridoxal phosphate)lysine mark.

Belongs to the SHMT family. As to quaternary structure, homodimer. The cofactor is pyridoxal 5'-phosphate.

The protein resides in the cytoplasm. The catalysed reaction is (6R)-5,10-methylene-5,6,7,8-tetrahydrofolate + glycine + H2O = (6S)-5,6,7,8-tetrahydrofolate + L-serine. The protein operates within one-carbon metabolism; tetrahydrofolate interconversion. Its pathway is amino-acid biosynthesis; glycine biosynthesis; glycine from L-serine: step 1/1. Catalyzes the reversible interconversion of serine and glycine with tetrahydrofolate (THF) serving as the one-carbon carrier. This reaction serves as the major source of one-carbon groups required for the biosynthesis of purines, thymidylate, methionine, and other important biomolecules. Also exhibits THF-independent aldolase activity toward beta-hydroxyamino acids, producing glycine and aldehydes, via a retro-aldol mechanism. The polypeptide is Serine hydroxymethyltransferase (Tropheryma whipplei (strain TW08/27) (Whipple's bacillus)).